Reading from the N-terminus, the 737-residue chain is Elongation factor 2 (737 aa).

Positions 18 to 262 (TRVRNIGIIA…AVIKFVPNPR (245 aa)) constitute a tr-type G domain. GTP-binding positions include 27–34 (AHVDHGKT), 93–97 (DTPGH), and 147–150 (NKVD). At His-604 the chain carries Diphthamide.

It belongs to the TRAFAC class translation factor GTPase superfamily. Classic translation factor GTPase family. EF-G/EF-2 subfamily.

It localises to the cytoplasm. In terms of biological role, catalyzes the GTP-dependent ribosomal translocation step during translation elongation. During this step, the ribosome changes from the pre-translocational (PRE) to the post-translocational (POST) state as the newly formed A-site-bound peptidyl-tRNA and P-site-bound deacylated tRNA move to the P and E sites, respectively. Catalyzes the coordinated movement of the two tRNA molecules, the mRNA and conformational changes in the ribosome. This Sulfolobus acidocaldarius (strain ATCC 33909 / DSM 639 / JCM 8929 / NBRC 15157 / NCIMB 11770) protein is Elongation factor 2 (fusA).